Here is a 410-residue protein sequence, read N- to C-terminus: MKLLKSSLLLLLPFVTANPIPSEDKDIIPGRYIVTLKDGITQEDIEYHKSWVASVHRSNLAAATAAGRPRLETEGIRKFFQIHKMNAYSGAFDDQTAEDIRRNPYVKSVTPDRKVYLADTVVQENAGYNLGHMSSKGRHSFTYRYDSTAGEGIWAYVLDTGINVDHIEFEGRADSGYNAIKNVSNTDNFGHGSFTAGIIAAKTYGVAKKATVISAKAFDTGSSTYDYIFDAYNWVVKNITDSGRQKKSVVNMSISSAKYQPFDDAVDNAFEAGITTVVAAGNDQRDASNNTPASAANAITVASIRFDNGRSLFSNYGSVVDIFAPGERIVSCWIGGNNATRKADGTSVSSPHVAGLVAYLMAIEDLPDPAAVTKRVLDLSIPDLVRDPGEGSPNRIAYNGIQEMNETVIA.

Positions 1-17 are cleaved as a signal peptide; sequence MKLLKSSLLLLLPFVTA. A propeptide spanning residues 18–118 is cleaved from the precursor; that stretch reads NPIPSEDKDI…VTPDRKVYLA (101 aa). An Inhibitor I9 domain is found at 31 to 118; sequence RYIVTLKDGI…VTPDRKVYLA (88 aa). Residues 127–410 enclose the Peptidase S8 domain; the sequence is GYNLGHMSSK…IQEMNETVIA (284 aa). The active-site Charge relay system is Asp-159. An N-linked (GlcNAc...) asparagine glycan is attached at Asn-182. Residue His-191 is the Charge relay system of the active site. N-linked (GlcNAc...) asparagine glycans are attached at residues Asn-238, Asn-251, and Asn-338. Ser-347 (charge relay system) is an active-site residue. A glycan (N-linked (GlcNAc...) asparagine) is linked at Asn-405.

The protein belongs to the peptidase S8 family.

The protein localises to the secreted. Its function is as follows. Secreted subtilisin-like serine protease with keratinolytic activity that contributes to pathogenicity. This chain is Subtilisin-like protease CPC735_003880, found in Coccidioides posadasii (strain C735) (Valley fever fungus).